The primary structure comprises 342 residues: MRDVVRFINPYDPGLFPEDFPDKEVVNLSSNENPYEPSEEVREAYLRAVKYIPRYPKADYARLKKALAEYTGFEVENIAVGCGASELISCICNVLLEELDRVVIPMPSYTLYSIYAMLRSASISFPVFEGYRVDPDVIAEERPKLVFLCSPNNPTGNSLSREIVQKVAESAEYVVLDEAYVEFSDDSKIEMVRDYNNLIVLRSFSKFFGLAGMRVGYAVCSAEIAEAIEKVRLPFGISYPAVETAIAALRSLDYYKKVRDRIVRERERLIEKLKEIEWLEVYPSDANFVLVKANKEGVVEKLAEKGFIVRDASVMGLEGLYIRITVGKREDNDRLIEALREI.

Lys206 carries the post-translational modification N6-(pyridoxal phosphate)lysine.

It belongs to the class-II pyridoxal-phosphate-dependent aminotransferase family. Histidinol-phosphate aminotransferase subfamily. Pyridoxal 5'-phosphate serves as cofactor.

It carries out the reaction L-histidinol phosphate + 2-oxoglutarate = 3-(imidazol-4-yl)-2-oxopropyl phosphate + L-glutamate. It participates in amino-acid biosynthesis; L-histidine biosynthesis; L-histidine from 5-phospho-alpha-D-ribose 1-diphosphate: step 7/9. This Archaeoglobus fulgidus (strain ATCC 49558 / DSM 4304 / JCM 9628 / NBRC 100126 / VC-16) protein is Histidinol-phosphate aminotransferase 2 (hisC2).